The primary structure comprises 486 residues: MGSKSPEGHRQAPHASNCNELKPANPDPQISQNGSGSADLDRGVIGDDDDDEDAEENGVNTETPNVGKLNQPPFPNLDQVHVTTTDGLCITEKKKKRKKSNKKKKKTKSGALPATELKQTSPPRVLVSTLFPSEYPVGELVPYDCTARTTDEELRYNSRLWDDDFLPDYRQAAEIHRQVRQYAQKELIKPGATLLSIAEGIEDGVRALSGHQGLEPGDFFKAGMGFPTGLCLNHIAAHWTPNPREKDVILDKGDVLKVDFGVHVNGRIVDSAFTVAFDDKYDNLLTAVREATNTGIKHAGVDARMSDIGAAIQEVMESYEVEIDGKVFPVKAIRNITGHDILRYHIHGGKQIPFIKNNNQDKMEEGEVYAIETFGSTGRGFLDDDVGVYGYGRNENMSGANLRLSSAKSLLKTIDASFGSIVFSRRYLERLGVKNYLLGMKNLIDNGIVECYSPLVDVKGSYTAQFEHTILLHSGGKEVISRGDDY.

The span at 1-10 shows a compositional bias: basic and acidic residues; sequence MGSKSPEGHR. The disordered stretch occupies residues 1 to 120; sequence MGSKSPEGHR…ALPATELKQT (120 aa). Acidic residues predominate over residues 46–56; the sequence is GDDDDDEDAEE. The span at 93–108 shows a compositional bias: basic residues; sequence KKKKRKKSNKKKKKTK. His238 lines the substrate pocket. A divalent metal cation is bound by residues Asp259, Asp270, and His339. His347 lines the substrate pocket. Residues Glu372 and Glu467 each contribute to the a divalent metal cation site.

The protein belongs to the peptidase M24A family. Methionine aminopeptidase eukaryotic type 2 subfamily. Requires Co(2+) as cofactor. It depends on Zn(2+) as a cofactor. The cofactor is Mn(2+). Fe(2+) is required as a cofactor.

It localises to the cytoplasm. The enzyme catalyses Release of N-terminal amino acids, preferentially methionine, from peptides and arylamides.. Its function is as follows. Cotranslationally removes the N-terminal methionine from nascent proteins. The N-terminal methionine is often cleaved when the second residue in the primary sequence is small and uncharged (Met-Ala-, Cys, Gly, Pro, Ser, Thr, or Val). The protein is Methionine aminopeptidase 2-2 of Aspergillus fumigatus (strain ATCC MYA-4609 / CBS 101355 / FGSC A1100 / Af293) (Neosartorya fumigata).